Here is a 248-residue protein sequence, read N- to C-terminus: Coproheme decarboxylase (248 aa).

Residues Arg130, 144 to 148, His171, Gln184, and Ser222 each bind Fe-coproporphyrin III; that span reads YPMDK. Tyr144 is a catalytic residue.

Belongs to the ChdC family. Type 1 subfamily. Homopentamer. It depends on Fe-coproporphyrin III as a cofactor.

The enzyme catalyses Fe-coproporphyrin III + 2 H2O2 + 2 H(+) = heme b + 2 CO2 + 4 H2O. It carries out the reaction Fe-coproporphyrin III + H2O2 + H(+) = harderoheme III + CO2 + 2 H2O. The catalysed reaction is harderoheme III + H2O2 + H(+) = heme b + CO2 + 2 H2O. Its pathway is porphyrin-containing compound metabolism; protoheme biosynthesis. Involved in coproporphyrin-dependent heme b biosynthesis. Catalyzes the decarboxylation of Fe-coproporphyrin III (coproheme) to heme b (protoheme IX), the last step of the pathway. The reaction occurs in a stepwise manner with a three-propionate intermediate. The protein is Coproheme decarboxylase of Geobacillus kaustophilus (strain HTA426).